The following is a 419-amino-acid chain: Hyaluronan synthase (419 aa).

5 helical membrane-spanning segments follow: residues 8-28, 33-53, 318-338, 345-365, and 376-396; these read LIVLSFIFLISILIYLNMYLF, VGIYGVILITYLVIKLGLSFL, IVALWTIFEVVMFMMLIVAIG, AIQLDLIKLFAFLSIIFIVAL, and PASFLLSPLYGILHLFVLQPL.

Belongs to the NodC/HAS family. The cofactor is Mg(2+).

It is found in the cell membrane. The catalysed reaction is [hyaluronan](n) + UDP-N-acetyl-alpha-D-glucosamine = N-acetyl-beta-D-glucosaminyl-(1-&gt;4)-[hyaluronan](n) + UDP + H(+). The enzyme catalyses N-acetyl-beta-D-glucosaminyl-(1-&gt;4)-[hyaluronan](n) + UDP-alpha-D-glucuronate = [hyaluronan](n+1) + UDP + H(+). The protein operates within glycan biosynthesis; hyaluronan biosynthesis. Glycosaminoglycan synthesis. The hyaluronic acid capsule is involved in the pathogenicity of group A Streptococci; it may be the major virulence determinant. The chain is Hyaluronan synthase (hasA) from Streptococcus pyogenes serotype M18 (strain MGAS8232).